We begin with the raw amino-acid sequence, 300 residues long: Ribosomal protein bS6--L-glutamate ligase (300 aa).

Residues 104 to 287 (MQLLARQGID…IAGKMIRWIE (184 aa)) enclose the ATP-grasp domain. ATP contacts are provided by residues K141, 178–179 (EY), D187, and 211–213 (RSN). Mg(2+)-binding residues include D248, E260, and N262. Mn(2+) is bound by residues D248, E260, and N262.

Belongs to the RimK family. The cofactor is Mg(2+). Mn(2+) serves as cofactor.

Functionally, an L-glutamate ligase that catalyzes the ATP-dependent post-translational addition of glutamate residues to the C-terminus of ribosomal protein bS6 (RpsF). Is also able to catalyze the synthesis of poly-alpha-glutamate in vitro, via ATP hydrolysis from unprotected glutamate as substrate. The number of glutamate residues added to either RpsF or to poly-alpha-glutamate changes with pH. The sequence is that of Ribosomal protein bS6--L-glutamate ligase from Shigella boydii serotype 18 (strain CDC 3083-94 / BS512).